Reading from the N-terminus, the 467-residue chain is ESX-4 secretion system protein eccD4 (467 aa).

Transmembrane regions (helical) follow at residues 122–142 (GALA…RNAL), 152–172 (ATAG…VIAC), 186–206 (VIAT…VPGV), 209–229 (VLVA…ITGC), 241–261 (AVVV…VPAI), 264–284 (LATL…VLLA), 319–339 (LTSL…GTAV), 344–364 (IHRS…LLLL), 374–394 (SLVF…VAAD), 401–421 (PWIA…GFVA), and 439–459 (CLAL…YSAV).

This sequence belongs to the EccD/Snm4 family. Part of the ESX-4 / type VII secretion system (T7SS), which is composed of cytosolic and membrane components.

The protein resides in the cell membrane. This Mycobacterium tuberculosis (strain CDC 1551 / Oshkosh) protein is ESX-4 secretion system protein eccD4 (eccD4).